The primary structure comprises 478 residues: MTLSFVTRWRDELPETYTALSPTPLNNARLIWHNTELANTLSIPSSLFKNGAGVWGGEALLPGMSPLAQVYSGHQFGVWAGQLGDGRGILLGEQLLADGTTMDWHLKGAGLTPYSRMGDGRAVLRSTIRESLASEAMHYLGIPTTRALSIVTSDSPVYRETAEPGAMLMRVAPSHLRFGHFEHFYYRRESEKVRQLADFAIRHYWSHLEDDEDKYRLWFSDVVARTASLIAQWQTVGFAHGVMNTDNMSLLGLTLDYGPFGFLDDYEPGFICNHSDHQGRYSFDNQPAVALWNLQRLAQTLSPFVAVDALNEALDSYQQVLLTHYGQRMRQKLGFITEQKEDNALLNELFSLMARERSDYTRTFRMLSLTEQHSTASPLRDEFIDRAAFDGWFARYRGRLQQDEVSDSERQQLMQSVNPALVLRNWLAQRAIEAAEKGDMTELHRLHGALRNPFSDRDDDYVSRPPDWGKRLEVSCSS.

Residues Gly84, Gly86, Arg87, Lys107, Asp119, Gly120, Arg170, and Arg177 each coordinate ATP. The active-site Proton acceptor is Asp246. The Mg(2+) site is built by Asn247 and Asp256. Residue Asp256 coordinates ATP.

The protein belongs to the SELO family. Requires Mg(2+) as cofactor. The cofactor is Mn(2+).

The catalysed reaction is L-seryl-[protein] + ATP = 3-O-(5'-adenylyl)-L-seryl-[protein] + diphosphate. It catalyses the reaction L-threonyl-[protein] + ATP = 3-O-(5'-adenylyl)-L-threonyl-[protein] + diphosphate. It carries out the reaction L-tyrosyl-[protein] + ATP = O-(5'-adenylyl)-L-tyrosyl-[protein] + diphosphate. The enzyme catalyses L-histidyl-[protein] + UTP = N(tele)-(5'-uridylyl)-L-histidyl-[protein] + diphosphate. The catalysed reaction is L-seryl-[protein] + UTP = O-(5'-uridylyl)-L-seryl-[protein] + diphosphate. It catalyses the reaction L-tyrosyl-[protein] + UTP = O-(5'-uridylyl)-L-tyrosyl-[protein] + diphosphate. In terms of biological role, nucleotidyltransferase involved in the post-translational modification of proteins. It can catalyze the addition of adenosine monophosphate (AMP) or uridine monophosphate (UMP) to a protein, resulting in modifications known as AMPylation and UMPylation. The chain is Protein nucleotidyltransferase YdiU from Shigella sonnei (strain Ss046).